The sequence spans 562 residues: Arginine--tRNA ligase (562 aa).

The 'HIGH' region signature appears at 136 to 146 (ANPTGPMHMGN).

Belongs to the class-I aminoacyl-tRNA synthetase family. As to quaternary structure, monomer.

The protein resides in the cytoplasm. The catalysed reaction is tRNA(Arg) + L-arginine + ATP = L-arginyl-tRNA(Arg) + AMP + diphosphate. The sequence is that of Arginine--tRNA ligase (argS) from Caldanaerobacter subterraneus subsp. tengcongensis (strain DSM 15242 / JCM 11007 / NBRC 100824 / MB4) (Thermoanaerobacter tengcongensis).